The sequence spans 142 residues: Nucleoside diphosphate kinase (142 aa).

The ATP site is built by Lys11, Phe59, Arg87, Thr93, Arg104, and Asn114. His117 serves as the catalytic Pros-phosphohistidine intermediate.

This sequence belongs to the NDK family. In terms of assembly, homotetramer. The cofactor is Mg(2+).

The protein localises to the cytoplasm. It carries out the reaction a 2'-deoxyribonucleoside 5'-diphosphate + ATP = a 2'-deoxyribonucleoside 5'-triphosphate + ADP. The enzyme catalyses a ribonucleoside 5'-diphosphate + ATP = a ribonucleoside 5'-triphosphate + ADP. Major role in the synthesis of nucleoside triphosphates other than ATP. The ATP gamma phosphate is transferred to the NDP beta phosphate via a ping-pong mechanism, using a phosphorylated active-site intermediate. The chain is Nucleoside diphosphate kinase from Aeromonas salmonicida (strain A449).